Consider the following 373-residue polypeptide: Eukaryotic translation initiation factor 3 subunit M (373 aa).

Serine 2 carries the post-translational modification N-acetylserine. Phosphoserine is present on residues serine 2 and serine 152. In terms of domain architecture, PCI spans 180 to 338 (AASKVMVELL…RKVVVSHSTH (159 aa)). Position 253 is an N6-acetyllysine (lysine 253). Position 366 is a phosphoserine (serine 366).

The protein belongs to the eIF-3 subunit M family. In terms of assembly, component of the eukaryotic translation initiation factor 3 (eIF-3) complex, which is composed of 13 subunits: EIF3A, EIF3B, EIF3C, EIF3D, EIF3E, EIF3F, EIF3G, EIF3H, EIF3I, EIF3J, EIF3K, EIF3L and EIF3M. The eIF-3 complex appears to include 3 stable modules: module A is composed of EIF3A, EIF3B, EIF3G and EIF3I; module B is composed of EIF3F, EIF3H, and EIF3M; and module C is composed of EIF3C, EIF3D, EIF3E, EIF3K and EIF3L. EIF3C of module C binds EIF3B of module A and EIF3H of module B, thereby linking the three modules. EIF3J is a labile subunit that binds to the eIF-3 complex via EIF3B. The eIF-3 complex interacts with RPS6KB1 under conditions of nutrient depletion. Mitogenic stimulation leads to binding and activation of a complex composed of MTOR and RPTOR, leading to phosphorylation and release of RPS6KB1 and binding of EIF4B to eIF-3.

It localises to the cytoplasm. Functionally, component of the eukaryotic translation initiation factor 3 (eIF-3) complex, which is required for several steps in the initiation of protein synthesis. The eIF-3 complex associates with the 40S ribosome and facilitates the recruitment of eIF-1, eIF-1A, eIF-2:GTP:methionyl-tRNAi and eIF-5 to form the 43S pre-initiation complex (43S PIC). The eIF-3 complex stimulates mRNA recruitment to the 43S PIC and scanning of the mRNA for AUG recognition. The eIF-3 complex is also required for disassembly and recycling of post-termination ribosomal complexes and subsequently prevents premature joining of the 40S and 60S ribosomal subunits prior to initiation. The eIF-3 complex specifically targets and initiates translation of a subset of mRNAs involved in cell proliferation, including cell cycling, differentiation and apoptosis, and uses different modes of RNA stem-loop binding to exert either translational activation or repression. The protein is Eukaryotic translation initiation factor 3 subunit M of Bos taurus (Bovine).